Here is an 87-residue protein sequence, read N- to C-terminus: Small cysteine-rich outer membrane protein omcA (87 aa).

The signal sequence occupies residues 1 to 19; it reads MKKAVLLATVFCGVVGLTS. Cys20 is lipidated: N-palmitoyl cysteine. Cys20 is lipidated: S-diacylglycerol cysteine.

Part of a disulfide cross-linked outer membrane complex (COMC) composed of the major outer membrane porin (MOMP), the small cysteine-rich protein (omcA) and the large cysteine-rich periplasmic protein (omcB). Post-translationally, N-terminal amide-linked and S-diacylglycerol cysteine-linked to 16:0, 18:0, 15:0 branched, and 17:0 branched fatty acids (ratio 6:5:3:4) in the EB stage. The exact distribution of fatty acids has not been determined. The N-terminus is blocked.

It is found in the cell outer membrane. Its function is as follows. In elementary bodies (EBs, the infectious stage, which is able to survive outside the host cell) provides the structural integrity of the outer envelope through disulfide cross-links with the large cysteine-rich periplasmic protein and the major outer membrane porin. It has been described in publications as the Sarkosyl-insoluble COMC (Chlamydia outer membrane complex), and serves as the functional equivalent of peptidoglycan. The polypeptide is Small cysteine-rich outer membrane protein omcA (omcA) (Chlamydia psittaci (Chlamydophila psittaci)).